A 918-amino-acid polypeptide reads, in one-letter code: Plasma membrane ATPase 1 (918 aa).

A compositionally biased stretch (low complexity) spans 1 to 18 (MTDTSSSSSSSSASSVSA). The disordered stretch occupies residues 1–84 (MTDTSSSSSS…VPEEYLQTDP (84 aa)). Topologically, residues 1–115 (MTDTSSSSSS…ADEKESLVVK (115 aa)) are cytoplasmic. Over residues 33–47 (AASESSDDDDIDALI) the composition is skewed to acidic residues. At serine 61 the chain carries Phosphoserine. Residues 116-136 (FVMFFVGPIQFVMEAAAILAA) traverse the membrane as a helical segment. Residues 137 to 140 (GLSD) are Extracellular-facing. Residues 141–160 (WVDFGVICGLLMLNAGVGFV) form a helical membrane-spanning segment. At 161 to 291 (QEFQAGSIVD…GQGHFTEVLN (131 aa)) the chain is on the cytoplasmic side. The residue at position 175 (threonine 175) is a Phosphothreonine. Lysine 252 is covalently cross-linked (Glycyl lysine isopeptide (Lys-Gly) (interchain with G-Cter in ubiquitin)). Residues 292-313 (GIGIILLVLVIATLLLVWTACF) form a helical membrane-spanning segment. Residues 314–325 (YRTNGIVRILRY) lie on the Extracellular side of the membrane. Residues 326–347 (TLGITIIGVPVGLPAVVTTTMA) form a helical membrane-spanning segment. Residues 348 to 719 (VGAAYLAKKQ…IAILDNSLDI (372 aa)) lie on the Cytoplasmic side of the membrane. Aspartate 378 functions as the 4-aspartylphosphate intermediate in the catalytic mechanism. A Glycyl lysine isopeptide (Lys-Gly) (interchain with G-Cter in ubiquitin) cross-link involves residue lysine 555. Mg(2+) is bound by residues aspartate 634 and aspartate 638. A helical membrane pass occupies residues 720–738 (DLIVFIAIFADVATLAIAY). Over 739 to 754 (DNAPYSPKPVKWNLPR) the chain is Extracellular. The helical transmembrane segment at 755-774 (LWGMSIILGIVLAIGSWITL) threads the bilayer. The Cytoplasmic segment spans residues 775 to 824 (TTMFLPKGGIIQNFGAMNGIMFLQISLTENWLIFITRAAGPFWSSIPSWQ). Residues 825-845 (LAGAVFAVDIIATMFTLFGWW) form a helical membrane-spanning segment. The Extracellular portion of the chain corresponds to 846 to 857 (SENWTDIVTVVR). A helical membrane pass occupies residues 858-874 (VWIWSIGIFCVLGGFYY). The Cytoplasmic segment spans residues 875 to 918 (EMSTSEAFDRLMNGKPMKEKKSTRSVEDFMAAMQRVSTQHEKET). Serine 911 bears the Phosphoserine mark. Residues threonine 912 and threonine 918 each carry the phosphothreonine modification.

It belongs to the cation transport ATPase (P-type) (TC 3.A.3) family. Type IIIA subfamily. As to quaternary structure, interacts with its cargot receptor EXP1 for its transport within the cell and maturation. In terms of processing, phosphorylated on multiple Ser and Thr residues.

It localises to the cell membrane. It catalyses the reaction ATP + H2O + H(+)(in) = ADP + phosphate + 2 H(+)(out). The plasma membrane ATPase of plants and fungi is a hydrogen ion pump. The proton gradient it generates drives the active transport of nutrients by H(+)-symport. The resulting external acidification and/or internal alkinization may mediate growth responses. This is Plasma membrane ATPase 1 (PMA1) from Saccharomyces cerevisiae (strain ATCC 204508 / S288c) (Baker's yeast).